A 556-amino-acid chain; its full sequence is Oxygen-dependent choline dehydrogenase (556 aa).

4–33 (DYIIIGAGSAGNVLATRLTEDPNTSVLLLE) contacts FAD. H473 (proton acceptor) is an active-site residue.

This sequence belongs to the GMC oxidoreductase family. The cofactor is FAD.

The catalysed reaction is choline + A = betaine aldehyde + AH2. It catalyses the reaction betaine aldehyde + NAD(+) + H2O = glycine betaine + NADH + 2 H(+). The protein operates within amine and polyamine biosynthesis; betaine biosynthesis via choline pathway; betaine aldehyde from choline (cytochrome c reductase route): step 1/1. In terms of biological role, involved in the biosynthesis of the osmoprotectant glycine betaine. Catalyzes the oxidation of choline to betaine aldehyde and betaine aldehyde to glycine betaine at the same rate. The chain is Oxygen-dependent choline dehydrogenase from Escherichia coli O139:H28 (strain E24377A / ETEC).